The sequence spans 747 residues: WD repeat-containing protein 91 (747 aa).

Residues 183–227 (QRTNQVQEENEVLRQKLFALQAEVHRLKKEEQQQEEAAALVQHKL) adopt a coiled-coil conformation. A Phosphoserine modification is found at serine 256. Residues 265–278 (LLPQSKKSPSRLSP) are compositionally biased toward low complexity. The segment at 265–358 (LLPQSKKSPS…SQTQCAEKKL (94 aa)) is disordered. Positions 283-299 (PQAQSSAKKDTFSSQAT) are enriched in polar residues. Serine 288 is subject to Phosphoserine. A compositionally biased stretch (basic and acidic residues) spans 332–343 (RLQDHGKERREL). The span at 344 to 353 (LSTSSSQTQC) shows a compositional bias: polar residues. 7 WD repeats span residues 406-445 (EHHS…QTKA), 448-488 (ISKS…NLCE), 511-555 (VCSA…QQLQ), 560-599 (PEPI…CAMS), 602-641 (AHCG…LKVS), 664-702 (VQVP…KVLE), and 709-747 (GHRA…AHKL).

Belongs to the WD repeat WDR91 family. As to quaternary structure, interacts with WDR81; involved in early to late endosome cargo transport. Interacts with BECN1; negatively regulates the PI3 kinase/PI3K activity associated with endosomal membranes.

It is found in the early endosome membrane. The protein resides in the late endosome membrane. Its function is as follows. Functions as a negative regulator of the PI3 kinase/PI3K activity associated with endosomal membranes via BECN1, a core subunit of the PI3K complex. By modifying the phosphatidylinositol 3-phosphate/PtdInsP3 content of endosomal membranes may regulate endosome fusion, recycling, sorting and early to late endosome transport. It is for instance, required for the delivery of cargos like BST2/tetherin from early to late endosome and thereby participates indirectly to their degradation by the lysosome. May play a role in meiosis. In Rattus norvegicus (Rat), this protein is WD repeat-containing protein 91.